A 723-amino-acid chain; its full sequence is Polyribonucleotide nucleotidyltransferase (723 aa).

Residues aspartate 488 and aspartate 494 each coordinate Mg(2+). Residues 555–614 (PRMITMKIHPDKIREVIGKGGSTIQALTKETGTTIDIQEDGTITIASTSTDGMAEAKRRI) enclose the KH domain. Positions 624–692 (GKIYAGTVLK…EKGRLRLSLK (69 aa)) constitute an S1 motif domain. Positions 701–723 (SISPINAGEAAAPAAPAEGSEQQ) are disordered. A compositionally biased stretch (low complexity) spans 707-723 (AGEAAAPAAPAEGSEQQ).

This sequence belongs to the polyribonucleotide nucleotidyltransferase family. Mg(2+) is required as a cofactor.

Its subcellular location is the cytoplasm. The enzyme catalyses RNA(n+1) + phosphate = RNA(n) + a ribonucleoside 5'-diphosphate. Its function is as follows. Involved in mRNA degradation. Catalyzes the phosphorolysis of single-stranded polyribonucleotides processively in the 3'- to 5'-direction. The chain is Polyribonucleotide nucleotidyltransferase from Cupriavidus necator (strain ATCC 17699 / DSM 428 / KCTC 22496 / NCIMB 10442 / H16 / Stanier 337) (Ralstonia eutropha).